A 154-amino-acid polypeptide reads, in one-letter code: Anti-sigma-E factor RseA (154 aa).

Phosphothreonine; by PknB is present on Thr39. Residues His66, Cys70, and Cys73 each contribute to the Zn(2+) site. The disordered stretch occupies residues 104 to 154; it reads SEIPRCPPEGPSKGSSGGSSQGPPDGAAAGFGDRFADGDGGNRGRQSRVRR. Residues 124-136 show a composition bias toward low complexity; sequence QGPPDGAAAGFGD.

This sequence belongs to the zinc-associated anti-sigma factor (ZAS) superfamily. As to quaternary structure, interacts with cognate ECF RNA polymerase sigma factor SigE under reducing conditions; this inhibits the interaction of SigE with the RNA polymerase catalytic core. Zn(2+) is required as a cofactor. Phosphorylated by PknB on Thr-39; can be dephosphorylated (at least in vitro) by PstP. Phosphorylation is the signal for subsequent degradation by the ClpC1-ClpP2 complex. Post-translationally, degraded following vancomycin treatment (surface stress) by a ClpC1-ClpP2 complex.

It is found in the cytoplasm. In terms of biological role, an anti-sigma factor for extracytoplasmic function (ECF) sigma factor SigE. ECF sigma factors are held in an inactive form by an anti-sigma factor. This is Anti-sigma-E factor RseA (rseA) from Mycobacterium tuberculosis (strain ATCC 25618 / H37Rv).